Consider the following 236-residue polypeptide: Ubiquinone biosynthesis O-methyltransferase (236 aa).

S-adenosyl-L-methionine is bound by residues Arg-36, Gly-60, Asp-81, and Leu-123.

It belongs to the methyltransferase superfamily. UbiG/COQ3 family.

The catalysed reaction is a 3-demethylubiquinol + S-adenosyl-L-methionine = a ubiquinol + S-adenosyl-L-homocysteine + H(+). The enzyme catalyses a 3-(all-trans-polyprenyl)benzene-1,2-diol + S-adenosyl-L-methionine = a 2-methoxy-6-(all-trans-polyprenyl)phenol + S-adenosyl-L-homocysteine + H(+). Its pathway is cofactor biosynthesis; ubiquinone biosynthesis. In terms of biological role, O-methyltransferase that catalyzes the 2 O-methylation steps in the ubiquinone biosynthetic pathway. This Rickettsia canadensis (strain McKiel) protein is Ubiquinone biosynthesis O-methyltransferase.